The sequence spans 606 residues: MRFQGFWLCLGLLFISVNAEFMDDSVEMEDFDENSEETDELSSEIKYKTPQPVGEVYFTETFDSGRLAGWVLSKAKKDDIDAEISIYDGRWEIEELKENRIPGDRGLVLKSRAKHHAISAVLAKPFIFADKPLVVQYEVNFQDGIDCGGAYIKLLADTDGLNLENFYDKTSYTIMFGPDKCGEDYKLHFIFRHKHPKTGVFEEKHAKPPDVDLKRFFTDRKTHLYTLVMNPDDTFEVLIDQIVVNKGSLLEDVVPPINPPKEIEDPTDEKPDDWDERAKIPDASAVKPEDWDESEPPQIVDSSAVKPDGWLDNEPEFIPDPNAEKPFDWNEDMDGEWEAPHISNPACRIGCGEWSPPMIDNPKYKGIWRPPMIDNPNYQGIWSPRKIPNPDYFEDNHPFLLTSFRALGLELWSMTSDIYFDNFIICSEKEVADRWAADGWGMKILIENANEPSIFKQLMSATEQRPWLWFIYLLTAALPIALIGSFCWPRKVKKKYEDVAFEKLDICKPQTKGALEQEVKEEKAALEKPVDLEEEKKQSDGEIVEKEEEGEPEEKSEEEIEIIEGQEEGNKSNKSGSEDEMKEADESTGSGDGPIKSVRKRRVRKE.

The first 19 residues, 1-19 (MRFQGFWLCLGLLFISVNA), serve as a signal peptide directing secretion. The Lumenal segment spans residues 20–466 (EFMDDSVEME…QLMSATEQRP (447 aa)). Lys124 is modified (N6-acetyllysine). Residues Cys147 and Cys181 are joined by a disulfide bond. Positions 255–308 (PPINPPKEIEDPTDEKPDDWDERAKIPDASAVKPEDWDESEPPQIVDSSAVKPD) are disordered. 8 consecutive repeat copies span residues 263 to 276 (IEDPTDEKPDDWDE), 280 to 293 (IPDASAVKPEDWDE), 299 to 312 (IVDSSAVKPDGWLD), 318 to 331 (IPDPNAEKPFDWNE), 335 to 348 (GEWEAPHISNPACR), 352 to 365 (GEWSPPMIDNPKYK), 366 to 379 (GIWRPPMIDNPNYQ), and 380 to 393 (GIWSPRKIPNPDYF). Over residues 265 to 275 (DPTDEKPDDWD) the composition is skewed to acidic residues. An interaction with PPIB region spans residues 313-346 (NEPEFIPDPNAEKPFDWNEDMDGEWEAPHISNPA). An intrachain disulfide couples Cys347 to Cys351. A helical transmembrane segment spans residues 467 to 487 (WLWFIYLLTAALPIALIGSFC). At 488–606 (WPRKVKKKYE…SVRKRRVRKE (119 aa)) the chain is on the cytoplasmic side. Positions 518 to 544 (EVKEEKAALEKPVDLEEEKKQSDGEIV) are enriched in basic and acidic residues. The segment at 518-606 (EVKEEKAALE…SVRKRRVRKE (89 aa)) is disordered. Positions 545 to 567 (EKEEEGEPEEKSEEEIEIIEGQE) are enriched in acidic residues. 7 positions are modified to phosphoserine: Ser556, Ser572, Ser575, Ser577, Ser587, Ser590, and Ser597. Residues 568–579 (EGNKSNKSGSED) show a composition bias toward basic and acidic residues. Residues 597–606 (SVRKRRVRKE) are compositionally biased toward basic residues.

This sequence belongs to the calreticulin family. Interacts with PPIB and PDILT. Interacts with ADAM2.

The protein localises to the endoplasmic reticulum membrane. In terms of biological role, functions during spermatogenesis as a chaperone for a range of client proteins that are important for sperm adhesion onto the egg zona pellucida and for subsequent penetration of the zona pellucida. Required for normal sperm migration from the uterus into the oviduct. Required for normal male fertility. Binds calcium ions. This is Calmegin (CLGN) from Bos taurus (Bovine).